Here is a 202-residue protein sequence, read N- to C-terminus: dTTP/UTP pyrophosphatase (202 aa).

Catalysis depends on Asp76, which acts as the Proton acceptor.

Belongs to the Maf family. YhdE subfamily. The cofactor is a divalent metal cation.

The protein resides in the cytoplasm. The enzyme catalyses dTTP + H2O = dTMP + diphosphate + H(+). It catalyses the reaction UTP + H2O = UMP + diphosphate + H(+). Functionally, nucleoside triphosphate pyrophosphatase that hydrolyzes dTTP and UTP. May have a dual role in cell division arrest and in preventing the incorporation of modified nucleotides into cellular nucleic acids. The sequence is that of dTTP/UTP pyrophosphatase from Neisseria gonorrhoeae (strain ATCC 700825 / FA 1090).